The following is a 415-amino-acid chain: Gamma-glutamyl phosphate reductase (415 aa).

This sequence belongs to the gamma-glutamyl phosphate reductase family.

The protein resides in the cytoplasm. It carries out the reaction L-glutamate 5-semialdehyde + phosphate + NADP(+) = L-glutamyl 5-phosphate + NADPH + H(+). The protein operates within amino-acid biosynthesis; L-proline biosynthesis; L-glutamate 5-semialdehyde from L-glutamate: step 2/2. In terms of biological role, catalyzes the NADPH-dependent reduction of L-glutamate 5-phosphate into L-glutamate 5-semialdehyde and phosphate. The product spontaneously undergoes cyclization to form 1-pyrroline-5-carboxylate. The chain is Gamma-glutamyl phosphate reductase from Xylella fastidiosa (strain 9a5c).